The primary structure comprises 294 residues: Flavin-dependent thymidylate synthase (294 aa).

Residues 27–250 (GFIRVIDYMG…PFTYEAFEEY (224 aa)) enclose the ThyX domain. FAD-binding positions include Thr-73, 96–98 (RHR), and Glu-104. Residues 93-96 (QWIR), 104-108 (EYSAR), and Arg-189 each bind dUMP. A ThyX motif motif is present at residues 96–106 (RHRTASVNEYS). FAD-binding positions include 205 to 207 (NLH) and His-211. Residue Arg-216 participates in dUMP binding. Arg-216 serves as the catalytic Involved in ionization of N3 of dUMP, leading to its activation.

This sequence belongs to the thymidylate synthase ThyX family. In terms of assembly, homotetramer. It depends on FAD as a cofactor.

It carries out the reaction dUMP + (6R)-5,10-methylene-5,6,7,8-tetrahydrofolate + NADPH + H(+) = dTMP + (6S)-5,6,7,8-tetrahydrofolate + NADP(+). It participates in pyrimidine metabolism; dTTP biosynthesis. Its function is as follows. Catalyzes the reductive methylation of 2'-deoxyuridine-5'-monophosphate (dUMP) to 2'-deoxythymidine-5'-monophosphate (dTMP) while utilizing 5,10-methylenetetrahydrofolate (mTHF) as the methyl donor, and NADPH and FADH(2) as the reductant. The polypeptide is Flavin-dependent thymidylate synthase (Rickettsia typhi (strain ATCC VR-144 / Wilmington)).